A 554-amino-acid polypeptide reads, in one-letter code: Probable efflux pump gsfJ (554 aa).

14 consecutive transmembrane segments (helical) span residues 54-74 (LAAVVFSLMLGMFLVALDNTI), 93-115 (SWYGSAYLMTFGCGFQSTWGKFY), 120-140 (IKVWFLVAVFIFEVGSLICAV), 152-172 (AIAGFGGSGVGVGIFTIIGFA), 181-201 (LLGFTGATYGIAAVLGPLIGG), 206-226 (KCFYINLPIGGVAAGTIFLLF), 248-268 (LVGATLMMGLIVSYILALQYG), 279-299 (VIGLLVGFFLFVLAFVTWEIY), 321-341 (IYMFFFSGAYFIILYYLPIYF), 349-369 (PIGSGVKMLALIIPLTLAAIV), 379-399 (IVPLFWIIGGALGTVGCGLFY), 410-430 (WVGYQIIVGFSTGWTFQIAMS), 447-467 (IVNFFMTVGGAFFISAAQCAF), and 518-538 (VFAITIAAFGVATVIGFFGSW).

This sequence belongs to the major facilitator superfamily.

The protein resides in the membrane. Functionally, probable efflux pump; part of the gene cluster that mediates the biosynthesis of griseofulvin. The chain is Probable efflux pump gsfJ from Penicillium aethiopicum.